The primary structure comprises 717 residues: UvrABC system protein C (717 aa).

Residues Asp16–Val95 enclose the GIY-YIG domain. A UVR domain is found at Gly208–Ala243. The disordered stretch occupies residues Glu467–Arg548. Over residues Glu477–Pro522 the composition is skewed to low complexity.

Belongs to the UvrC family. As to quaternary structure, interacts with UvrB in an incision complex.

The protein localises to the cytoplasm. The UvrABC repair system catalyzes the recognition and processing of DNA lesions. UvrC both incises the 5' and 3' sides of the lesion. The N-terminal half is responsible for the 3' incision and the C-terminal half is responsible for the 5' incision. This chain is UvrABC system protein C, found in Streptomyces griseus subsp. griseus (strain JCM 4626 / CBS 651.72 / NBRC 13350 / KCC S-0626 / ISP 5235).